Reading from the N-terminus, the 150-residue chain is Glycine cleavage system H-like protein gcvH2 (150 aa).

A Lipoyl-binding domain is found at 44–126 (VATVGLSSFG…PANNWMVKFK (83 aa)).

The protein belongs to the GcvH family.

The sequence is that of Glycine cleavage system H-like protein gcvH2 (gcvH2) from Dictyostelium discoideum (Social amoeba).